Consider the following 492-residue polypeptide: MNCSLRCRFFLILVMAGFSFFVALFGMRLMHKMAEFAYFEREHVVALSKVYYELHKKEINISFIVGQVQRARRQTTAVNSLWKGDKALLRLLGKGLILELSEASEIKLGLLERYASSIYKDGLNPGHIEEMKRLVSWPYTNSNRFGIEIADISKRVKAYVYFLVVSINCLFFVVIFLLMKKTRSSIDEIVHVMNDMSRGDLTYRTIPSNDEVGKMQSSIIAMGAGVSALIESIKHIQGDLFNSAGEALNISQSTSNDICDQAGKIDEFVSALSQISFAITETSNAANKSSALSSEGRQLAVHGQKAIETAVSSINALSQRVNDSHVAIKCIEADIAKIGKIIEIIDQITDQTNLLALNAAIEAAHAGEAGKGFAVVADEVRSLAQRTNNSTYEIQAMIASLNKGIFFALGVMGDCVVESKNSVNAASEASRSIEKIVDSVSQVMLQIAQVATASEEQSAVVKDMLDNANIIREIAAGVELGSRRISEVNTHR.

2 helical membrane-spanning segments follow: residues 9–29 (FFLI…GMRL) and 159–179 (YVYF…FLLM). The HAMP domain occupies 180 to 231 (KKTRSSIDEIVHVMNDMSRGDLTYRTIPSNDEVGKMQSSIIAMGAGVSALIE). One can recognise a Methyl-accepting transducer domain in the interval 236–472 (IQGDLFNSAG…DMLDNANIIR (237 aa)).

Belongs to the methyl-accepting chemotaxis (MCP) protein family.

It localises to the membrane. It participates in hydrocarbon metabolism; alkane degradation. Chemotactic-signal transducers respond to changes in the concentration of attractants and repellents in the environment, transduce a signal from the outside to the inside of the cell, and facilitate sensory adaptation through the variation of the level of methylation. In Ectopseudomonas oleovorans (Pseudomonas oleovorans), this protein is Putative methyl-accepting chemotaxis AlkN (alkN).